The following is an 822-amino-acid chain: Endonuclease MutS2 (822 aa).

348 to 355 (GPNTGGKT) provides a ligand contact to ATP. The tract at residues 707–737 (SLNGKKVEPPPKSEPVPKKVKAEPPATEAKS) is disordered. Residues 709–728 (NGKKVEPPPKSEPVPKKVKA) are compositionally biased toward basic and acidic residues. One can recognise a Smr domain in the interval 749 to 822 (LDCRGDRLER…GAGVTIAYLR (74 aa)).

The protein belongs to the DNA mismatch repair MutS family. MutS2 subfamily. In terms of assembly, homodimer. Binds to stalled ribosomes, contacting rRNA.

Endonuclease that is involved in the suppression of homologous recombination and thus may have a key role in the control of bacterial genetic diversity. Functionally, acts as a ribosome collision sensor, splitting the ribosome into its 2 subunits. Detects stalled/collided 70S ribosomes which it binds and splits by an ATP-hydrolysis driven conformational change. Acts upstream of the ribosome quality control system (RQC), a ribosome-associated complex that mediates the extraction of incompletely synthesized nascent chains from stalled ribosomes and their subsequent degradation. Probably generates substrates for RQC. The sequence is that of Endonuclease MutS2 from Synechocystis sp. (strain ATCC 27184 / PCC 6803 / Kazusa).